The chain runs to 85 residues: Alpha-insect toxin Bot14 (85 aa).

An N-terminal signal peptide occupies residues 1-18 (MSSLMISTAMKGKAPYRQ). Positions 20-84 (RDGYIAQPHN…GIIVHGEKCH (65 aa)) constitute an LCN-type CS-alpha/beta domain. 4 disulfide bridges follow: Cys-30/Cys-83, Cys-34/Cys-55, Cys-41/Cys-65, and Cys-45/Cys-67.

It belongs to the long (4 C-C) scorpion toxin superfamily. Sodium channel inhibitor family. Alpha subfamily. As to expression, expressed by the venom gland.

The protein localises to the secreted. In terms of biological role, alpha toxins bind voltage-independently at site-3 of sodium channels (Nav) and inhibit the inactivation of the activated channels, thereby blocking neuronal transmission. This toxin is active only on insects. The protein is Alpha-insect toxin Bot14 of Buthus occitanus tunetanus (Common European scorpion).